Consider the following 220-residue polypeptide: Adapter protein MecA (220 aa).

It belongs to the MecA family. In terms of assembly, homodimer.

In terms of biological role, enables the recognition and targeting of unfolded and aggregated proteins to the ClpC protease or to other proteins involved in proteolysis. This chain is Adapter protein MecA, found in Macrococcus caseolyticus (strain JCSC5402) (Macrococcoides caseolyticum).